A 189-amino-acid polypeptide reads, in one-letter code: Cell division protein SepF (189 aa).

Residues 152–163 (FQEEPSPSSVMN) show a composition bias toward polar residues. Positions 152–189 (FQEEPSPSSVMNKDNEGPVSESVMAPEPAWGASVPSAI) are disordered.

It belongs to the SepF family. In terms of assembly, homodimer. Interacts with FtsZ.

It localises to the cytoplasm. Functionally, cell division protein that is part of the divisome complex and is recruited early to the Z-ring. Probably stimulates Z-ring formation, perhaps through the cross-linking of FtsZ protofilaments. Its function overlaps with FtsA. The sequence is that of Cell division protein SepF from Prochlorococcus marinus (strain SARG / CCMP1375 / SS120).